The chain runs to 940 residues: Serine/threonine-protein phosphatase 1 regulatory subunit 10 (940 aa).

An interaction with TOX4 region spans residues 1–348 (MGSGPIDPKE…EPAPPSEAMD (348 aa)). In terms of domain architecture, TFIIS N-terminal spans 73-147 (KLLNNWLTYS…SDWMAVIRSQ (75 aa)). Disordered regions lie at residues 147–211 (QSST…FRST), 247–270 (SNVA…NTTP), 304–400 (KIKK…KSVT), and 533–905 (YVET…HGGD). 2 stretches are compositionally biased toward basic and acidic residues: residues 153-166 (AEKD…EGKS) and 174-196 (PLTE…EKPK). A Glycyl lysine isopeptide (Lys-Gly) (interchain with G-Cter in SUMO2) cross-link involves residue lysine 179. Residue threonine 256 is modified to Phosphothreonine. A Glycyl lysine isopeptide (Lys-Gly) (interchain with G-Cter in SUMO2) cross-link involves residue lysine 262. Residue serine 313 is modified to Phosphoserine. Low complexity predominate over residues 325–336 (KTSTEPSTAKPS). The interval 357-433 (PPVEVPELMD…NKIKDFGEAA (77 aa)) is necessary for interaction with PPP1CA. Residue serine 382 is modified to Phosphoserine. The segment at 393-408 (GRKRKSVTWPEEGKLR) is necessary for interaction with PPP1CC. Positions 394-423 (RKRKSVTWPEEGKLREYFYFELDETERVNV) match the PP1-binding motif motif. The residue at position 398 (serine 398) is a Phosphoserine; by PKA. The tract at residues 418-619 (TERVNVNKIK…IKQMLVPHGL (202 aa)) is interaction with WDR82. Composition is skewed to gly residues over residues 540 to 551 (GGSGGSPDGAGG) and 565 to 579 (MGAG…GGGI). Position 545 is a phosphoserine (serine 545). The span at 583–595 (EILTSIMGSPNSH) shows a compositional bias: polar residues. Serine 591 is modified (phosphoserine). Basic and acidic residues predominate over residues 596–611 (PSEELLKQPDYSDKIK). Positions 644 to 655 (PPGPGGPMPGPH) are enriched in pro residues. An Omega-N-methylarginine modification is found at arginine 665. Over residues 676 to 690 (GDPFWDGPGDPMRGG) the composition is skewed to low complexity. Residue arginine 693 is modified to Omega-N-methylarginine. Over residues 714–723 (EPPPPPPPPF) the composition is skewed to pro residues. 2 stretches are compositionally biased toward gly residues: residues 726–764 (ARGG…GMGN) and 790–845 (SSMG…GSGG). Residue arginine 739 is modified to Omega-N-methylarginine. Basic and acidic residues-rich tracts occupy residues 862 to 886 (PHDV…HDGP) and 894 to 903 (RGHDGGHSHG). A C3H1-type zinc finger spans residues 906–934 (MSNRPVCRHFMMKGNCRYENNCAFYHPGV).

As to quaternary structure, component of the PNUTS-PP1 complex (also named PTW/PP1 complex), composed of PPP1R10/PNUTS, TOX4, WDR82, and PPP1CA (or PPP1CB or PPP1CC). In terms of processing, phosphorylated on Ser-398 by PKA within the region necessary for interaction with PPP1CA.

It localises to the nucleus. The protein resides in the chromosome. Functionally, substrate-recognition component of the PNUTS-PP1 protein phosphatase complex, a protein phosphatase 1 (PP1) complex that promotes RNA polymerase II transcription pause-release, allowing transcription elongation. Promoter-proximal pausing by RNA polymerase II is a transcription halt following transcription initiation but prior to elongation, which acts as a checkpoint to control that transcripts are favorably configured for transcriptional elongation. The PNUTS-PP1 complex mediates the release of RNA polymerase II from promoter-proximal region of genes by catalyzing dephosphorylation of proteins involved in transcription, such as AFF4, CDK9, MEPCE, INTS12, NCBP1, POLR2M/GDOWN1 and SUPT6H. The PNUTS-PP1 complex also regulates RNA polymerase II transcription termination by mediating dephosphorylation of SUPT5H in termination zones downstream of poly(A) sites, thereby promoting deceleration of RNA polymerase II transcription. PNUTS-PP1 complex is also involved in the response to replication stress by mediating dephosphorylation of POLR2A at 'Ser-5' of the CTD, promoting RNA polymerase II degradation. The PNUTS-PP1 complex also plays a role in the control of chromatin structure and cell cycle progression during the transition from mitosis into interphase. PNUTS-PP1 complex mediates dephosphorylation of MYC, promoting MYC stability by preventing MYC ubiquitination by the SCF(FBXW7) complex. In addition to acts as a substrate-recognition component, PPP1R10/PNUTS also acts as a nuclear targeting subunit for the PNUTS-PP1 complex. In some context, PPP1R10/PNUTS also acts as an inhibitor of protein phosphatase 1 (PP1) activity by preventing access to substrates, such as RB. In Macaca mulatta (Rhesus macaque), this protein is Serine/threonine-protein phosphatase 1 regulatory subunit 10 (PPP1R10).